The following is a 303-amino-acid chain: Cobalamin biosynthesis protein CobD (303 aa).

4 consecutive transmembrane segments (helical) span residues 65–85 (LLAW…IVLL), 147–167 (DAVF…VVLY), 235–255 (AGPV…GAAI), and 283–303 (LVWA…WLYA).

It belongs to the CobD/CbiB family.

The protein resides in the cell membrane. The protein operates within cofactor biosynthesis; adenosylcobalamin biosynthesis. In terms of biological role, converts cobyric acid to cobinamide by the addition of aminopropanol on the F carboxylic group. In Stutzerimonas stutzeri (strain A1501) (Pseudomonas stutzeri), this protein is Cobalamin biosynthesis protein CobD.